Here is a 349-residue protein sequence, read N- to C-terminus: Histidinol-phosphate aminotransferase (349 aa).

Lysine 210 bears the N6-(pyridoxal phosphate)lysine mark.

Belongs to the class-II pyridoxal-phosphate-dependent aminotransferase family. Histidinol-phosphate aminotransferase subfamily. As to quaternary structure, homodimer. It depends on pyridoxal 5'-phosphate as a cofactor.

It carries out the reaction L-histidinol phosphate + 2-oxoglutarate = 3-(imidazol-4-yl)-2-oxopropyl phosphate + L-glutamate. It functions in the pathway amino-acid biosynthesis; L-histidine biosynthesis; L-histidine from 5-phospho-alpha-D-ribose 1-diphosphate: step 7/9. This chain is Histidinol-phosphate aminotransferase, found in Flavobacterium johnsoniae (strain ATCC 17061 / DSM 2064 / JCM 8514 / BCRC 14874 / CCUG 350202 / NBRC 14942 / NCIMB 11054 / UW101) (Cytophaga johnsonae).